We begin with the raw amino-acid sequence, 701 residues long: Elongation factor G (701 aa).

Residues 6–286 (KFTRNIGIAA…YVMELLPSPL (281 aa)) form the tr-type G domain. GTP is bound by residues 15–22 (AHIDAGKT), 83–87 (DTPGH), and 137–140 (NKMD).

The protein belongs to the TRAFAC class translation factor GTPase superfamily. Classic translation factor GTPase family. EF-G/EF-2 subfamily.

Its subcellular location is the cytoplasm. Catalyzes the GTP-dependent ribosomal translocation step during translation elongation. During this step, the ribosome changes from the pre-translocational (PRE) to the post-translocational (POST) state as the newly formed A-site-bound peptidyl-tRNA and P-site-bound deacylated tRNA move to the P and E sites, respectively. Catalyzes the coordinated movement of the two tRNA molecules, the mRNA and conformational changes in the ribosome. This is Elongation factor G from Cytophaga hutchinsonii (strain ATCC 33406 / DSM 1761 / CIP 103989 / NBRC 15051 / NCIMB 9469 / D465).